A 366-amino-acid polypeptide reads, in one-letter code: GTP-binding protein 10 (366 aa).

An Obg domain is found at 13–148 (GNFIDNLRIF…RIVHLDLKVI (136 aa)). Residues 149–344 (ADVGLVGFPN…LKSCIRKALD (196 aa)) form the OBG-type G domain. GTP-binding positions include 155–162 (GFPNAGKS), 202–206 (DLPGL), and 278–281 (NKMD). The segment covering 346-355 (QDGKESDAHR) has biased composition (basic and acidic residues). The segment at 346–366 (QDGKESDAHRSKQLLNLQSSS) is disordered.

This sequence belongs to the TRAFAC class OBG-HflX-like GTPase superfamily. OBG GTPase family.

It localises to the nucleus. It is found in the nucleolus. Its function is as follows. May be involved in the ribosome maturation process. The protein is GTP-binding protein 10 (Gtpbp10) of Mus musculus (Mouse).